Here is a 111-residue protein sequence, read N- to C-terminus: Large ribosomal subunit protein uL22 (111 aa).

Belongs to the universal ribosomal protein uL22 family. In terms of assembly, part of the 50S ribosomal subunit.

In terms of biological role, this protein binds specifically to 23S rRNA; its binding is stimulated by other ribosomal proteins, e.g. L4, L17, and L20. It is important during the early stages of 50S assembly. It makes multiple contacts with different domains of the 23S rRNA in the assembled 50S subunit and ribosome. Its function is as follows. The globular domain of the protein is located near the polypeptide exit tunnel on the outside of the subunit, while an extended beta-hairpin is found that lines the wall of the exit tunnel in the center of the 70S ribosome. This chain is Large ribosomal subunit protein uL22, found in Chlamydia felis (strain Fe/C-56) (Chlamydophila felis).